Reading from the N-terminus, the 339-residue chain is MEHARDLTLLPKAHLHLHFTGSMRPSTLLELADKYGVRLPDALTAGEPPKLRATDERGWFRFQRLYDAARSCLREPDDIRRLVREAAEEDVRDGSGWLEIQVDPTSYAPLLGGMIPAVEIILDAVDAASRETGLGMRVLIAANRMKHPLDARTLARLAVRYADRGIVGFGLSNDERRGMARDFDRAFAIAREGGLLAAPHGGELTGPSSVRDCLDDLHASRIGHGVRAAEDPRLLKRLADRQITCEVCPASNVALGVYERPEDVPLRTLFEAGVPMALGADDPLLFGSRLAAQYEIARRHHAFTDTELAELARQSVRGSAAPDDVQAKLLAGIDHWLTG.

Histidine 16, histidine 18, and histidine 200 together coordinate Zn(2+). Histidine 18 provides a ligand contact to substrate. Glutamate 203 (proton donor) is an active-site residue. Position 281 (aspartate 281) interacts with Zn(2+). Aspartate 282 is a substrate binding site.

This sequence belongs to the metallo-dependent hydrolases superfamily. Adenosine and AMP deaminases family. Requires Zn(2+) as cofactor.

In terms of biological role, putative nucleoside deaminase. May catalyze the hydrolytic deamination of adenosine or some similar substrate and play a role in purine metabolism. The polypeptide is Putative adenosine/adenine deaminase (Streptomyces virginiae (Streptomyces cinnamonensis)).